A 294-amino-acid polypeptide reads, in one-letter code: Eukaryotic translation initiation factor 3 subunit F (294 aa).

In terms of domain architecture, MPN spans 7–155 (VNVHPGVYMN…VRAYLRSKAG (149 aa)).

The protein belongs to the eIF-3 subunit F family. In terms of assembly, component of the eukaryotic translation initiation factor 3 (eIF-3) complex.

The protein localises to the cytoplasm. Component of the eukaryotic translation initiation factor 3 (eIF-3) complex, which is involved in protein synthesis of a specialized repertoire of mRNAs and, together with other initiation factors, stimulates binding of mRNA and methionyl-tRNAi to the 40S ribosome. The eIF-3 complex specifically targets and initiates translation of a subset of mRNAs involved in cell proliferation. The polypeptide is Eukaryotic translation initiation factor 3 subunit F (Caenorhabditis elegans).